The chain runs to 63 residues: MNFAKILSFVFALVLALSMTSAAPEPRWKIFKKIEKMGRNIRDGIVKAGPAIEVLGSAKAIGK.

The N-terminal stretch at 1–22 (MNFAKILSFVFALVLALSMTSA) is a signal peptide. The propeptide at 23–26 (APEP) is removed by a dipeptidylpeptidase. Lys47 carries the post-translational modification 5-hydroxylysine; partial. Ile61 is subject to Isoleucine amide.

The protein belongs to the cecropin family. Lepidopteran-B differs from lepidopteran-A by its hydroxylated residue. As to expression, highest expression in fat body and hemocytes. Is also expressed in Malpighian tubules and to a much lesser extent in midgut. Not present in silk gland.

It localises to the secreted. Functionally, cecropins have lytic and antibacterial activity against several Gram-positive and Gram-negative bacteria. The protein is Cecropin-B (CECB1) of Bombyx mori (Silk moth).